The following is a 478-amino-acid chain: ATP-dependent RNA helicase DDX19A (478 aa).

Ala2 carries the N-acetylalanine modification. The N-terminal lobe stretch occupies residues 2–299 (ATDSWALAVD…DPNIIKLKRE (298 aa)). Lys26 participates in a covalent cross-link: Glycyl lysine isopeptide (Lys-Gly) (interchain with G-Cter in SUMO1); alternate. Lys26 participates in a covalent cross-link: Glycyl lysine isopeptide (Lys-Gly) (interchain with G-Cter in SUMO2); alternate. The disordered stretch occupies residues 34–53 (TNGVIKTSTTAEKTEEEEKE). The residue at position 42 (Thr42) is a Phosphothreonine. Residues 54-67 (DRAAQSLLNKLIRS) form an N-terminal helix region. Positions 91 to 119 (KSFEELRLKPQLLQGVYAMGFNRPSKIQE) match the Q motif motif. ATP-binding positions include Gln118 and 137 to 144 (SQSGTGKT). The Helicase ATP-binding domain occupies 124–294 (MMLAEPPQNL…QKVVPDPNII (171 aa)). The DEAD box motif lies at 241 to 244 (DEAD). The C-terminal lobe stretch occupies residues 300–478 (EETLDTIKQY…DLDEIEKIAN (179 aa)). Positions 305–473 (TIKQYYVLCN…RLDTDDLDEI (169 aa)) constitute a Helicase C-terminal domain. Residues Arg428 and Arg431 each coordinate ATP.

Belongs to the DEAD box helicase family. DDX19/DBP5 subfamily. Found in testis, heart, brain, liver, skeletal muscle, and kidney.

Its subcellular location is the cytoplasm. The protein resides in the nucleus. It is found in the nucleoplasm. The catalysed reaction is ATP + H2O = ADP + phosphate + H(+). Functionally, ATP-dependent RNA helicase involved in mRNA export from the nucleus. Rather than unwinding RNA duplexes, DDX19 functions as a remodeler of ribonucleoprotein particles, whereby proteins bound to nuclear mRNA are dissociated and replaced by cytoplasmic mRNA binding proteins. The protein is ATP-dependent RNA helicase DDX19A (Ddx19a) of Mus musculus (Mouse).